Here is a 273-residue protein sequence, read N- to C-terminus: Bis(5'-nucleosyl)-tetraphosphatase, symmetrical (273 aa).

This sequence belongs to the Ap4A hydrolase family.

The catalysed reaction is P(1),P(4)-bis(5'-adenosyl) tetraphosphate + H2O = 2 ADP + 2 H(+). In terms of biological role, hydrolyzes diadenosine 5',5'''-P1,P4-tetraphosphate to yield ADP. The protein is Bis(5'-nucleosyl)-tetraphosphatase, symmetrical of Histophilus somni (strain 129Pt) (Haemophilus somnus).